The sequence spans 345 residues: MLAARLVCLRTLPSRVFHPAFTKASPVVKNSITKNQWLLTPSREYATKTRIGIRRGRTGQELKEAALEPSMEKIFKIDQMGRWFVAGGAAVGLGALCYYGLGLSNEIGAIEKAVIWPQYVKDRIHSTYMYLAGSIGLTALSAIAISRTPVLMNFMMRGSWVTIGVTFAAMVGAGMLVRSIPYDQSPGPKHLAWLLHSGVMGAVVAPLTILGGPLLIRAAWYTAGIVGGLSTVAMCAPSEKFLNMGAPLGVGLGLVFVSSLGSMFLPPTTVAGATLYSVAMYGGLVLFSMFLLYDTQKVIKRAEVSPMYGVQKYDPINSMLSIYMDTLNIFMRVATMLATGGNRKK.

A mitochondrion-targeting transit peptide spans methionine 1 to tyrosine 45. Residues alanine 46–arginine 82 lie on the Mitochondrial matrix side of the membrane. Residues tryptophan 83–leucine 103 form a helical membrane-spanning segment. Residues serine 104–histidine 125 lie on the Mitochondrial intermembrane side of the membrane. Residues serine 126–serine 146 traverse the membrane as a helical segment. The Mitochondrial matrix segment spans residues arginine 147–serine 159. Residues tryptophan 160–isoleucine 180 traverse the membrane as a helical segment. The Mitochondrial intermembrane segment spans residues proline 181 to histidine 190. The chain crosses the membrane as a helical span at residues leucine 191–glycine 211. Residues glycine 212–proline 213 are Mitochondrial matrix-facing. Residues leucine 214 to methionine 234 form a helical membrane-spanning segment. The Mitochondrial intermembrane portion of the chain corresponds to cysteine 235–methionine 244. A helical transmembrane segment spans residues glycine 245–leucine 265. Topologically, residues proline 266–alanine 271 are mitochondrial matrix. Residues glycine 272–leucine 292 traverse the membrane as a helical segment. Residues tyrosine 293–lysine 345 lie on the Mitochondrial intermembrane side of the membrane.

This sequence belongs to the BI1 family. As to quaternary structure, interacts with LETM1. Interacts with AFG3L2. Undergoes AFG3L2-mediated proteolytic degradation, upon hyperpolarization of mitochondria.

The protein localises to the mitochondrion inner membrane. It carries out the reaction Ca(2+)(in) + 2 H(+)(out) = Ca(2+)(out) + 2 H(+)(in). It catalyses the reaction K(+)(in) + H(+)(out) = K(+)(out) + H(+)(in). Its function is as follows. Plays an important role in maintenance of mitochondrial morphology and in mediating either calcium or potassium/proton antiport. Mediates proton-dependent calcium efflux from mitochondrion. Also functions as an electroneutral mitochondrial proton/potassium exchanger. Required for the mitochondrial tubular network and cristae organization. Involved in apoptotic release of cytochrome c. Inhibits the proteolytic activity of AFG3L2, stimulating respiration and stabilizing respiratory enzymes in actively respiring mitochondria. However, when mitochondria become hyperpolarized, GHITM loses its inhibitory activity toward AFG3L2 and the now the active AFG3L2 turns first on GHITM and, if hyperpolarization persists, on other proteins of the mitochondria, leading to a broad remodeling of the mitochondrial proteome. This chain is Growth hormone-inducible transmembrane protein (GHITM), found in Homo sapiens (Human).